We begin with the raw amino-acid sequence, 338 residues long: Lipopolysaccharide 1,2-glucosyltransferase (338 aa).

Residues 33 to 38 and 130 to 131 contribute to the UDP site; these read GVDANY and DA. Mg(2+) is bound by residues Asp130 and Asp132. Short sequence motifs (DXD) lie at residues 130-132 and 215-217; these read DAD and DQD. Mg(2+) is bound at residue His264. 264–270 provides a ligand contact to UDP; the sequence is HYTGATK.

The protein belongs to the glycosyltransferase 8 family. Requires Mg(2+) as cofactor.

It localises to the cell inner membrane. The enzyme catalyses UDP-glucose + [lipopolysaccharide] = UDP + D-glucosyl-[lipopolysaccharide].. The catalysed reaction is alpha-D-Glc-(1-&gt;3)-[alpha-D-Gal-(1-&gt;6)]-alpha-D-Glc-(1-&gt;3)-[L-alpha-D-Hep-(1-&gt;7)]-4-O-PO3(2-)-L-alpha-D-Hep-(1-&gt;3)-4-O-PO3(2-)-L-alpha-D-Hep-(1-&gt;5)-[alpha-Kdo-(2-&gt;4)]-alpha-Kdo-(2-&gt;6)-lipid A + UDP-alpha-D-glucose = alpha-D-Glc-(1-&gt;2)-alpha-D-Glc-(1-&gt;3)-[alpha-D-Gal-(1-&gt;6)]-alpha-D-Glc-(1-&gt;3)-[L-alpha-D-Hep-(1-&gt;7)]-4-O-PO3(2-)-L-alpha-D-Hep-(1-&gt;3)-4-O-PO3(2-)-L-alpha-D-Hep-(1-&gt;5)-[alpha-Kdo-(2-&gt;4)]-alpha-Kdo-(2-&gt;6)-lipid A + UDP + H(+). Its pathway is bacterial outer membrane biogenesis; LPS core biosynthesis. Functionally, glucosyltransferase involved in the biosynthesis of the core oligosaccharide region of lipopolysaccharide (LPS). Catalyzes the addition of a glucose (glucose III) to the outer-core glucose II. The protein is Lipopolysaccharide 1,2-glucosyltransferase of Escherichia coli (strain K12).